Here is a 105-residue protein sequence, read N- to C-terminus: Large ribosomal subunit protein bL21 (105 aa).

It belongs to the bacterial ribosomal protein bL21 family. As to quaternary structure, part of the 50S ribosomal subunit. Contacts protein L20.

In terms of biological role, this protein binds to 23S rRNA in the presence of protein L20. The chain is Large ribosomal subunit protein bL21 from Dictyoglomus thermophilum (strain ATCC 35947 / DSM 3960 / H-6-12).